We begin with the raw amino-acid sequence, 455 residues long: tRNA modification GTPase MnmE (455 aa).

(6S)-5-formyl-5,6,7,8-tetrahydrofolate is bound by residues Arg26, Glu86, and Arg125. Residues 222–376 (GLKTAIIGRP…VEEKINQIFF (155 aa)) enclose the TrmE-type G domain. Asn232 lines the K(+) pocket. Residues 232–237 (NVGKSS), 251–257 (TDIAGTT), and 276–279 (DTAG) each bind GTP. Position 236 (Ser236) interacts with Mg(2+). Residues Thr251, Ile253, and Thr256 each contribute to the K(+) site. Position 257 (Thr257) interacts with Mg(2+). (6S)-5-formyl-5,6,7,8-tetrahydrofolate is bound at residue Lys455.

Belongs to the TRAFAC class TrmE-Era-EngA-EngB-Septin-like GTPase superfamily. TrmE GTPase family. In terms of assembly, homodimer. Heterotetramer of two MnmE and two MnmG subunits. The cofactor is K(+).

Its subcellular location is the cytoplasm. Its function is as follows. Exhibits a very high intrinsic GTPase hydrolysis rate. Involved in the addition of a carboxymethylaminomethyl (cmnm) group at the wobble position (U34) of certain tRNAs, forming tRNA-cmnm(5)s(2)U34. In Lactococcus lactis subsp. lactis (strain IL1403) (Streptococcus lactis), this protein is tRNA modification GTPase MnmE.